The primary structure comprises 564 residues: MLISRNKLILLLGIVFFERGKSATLSLPKAPSCGQSLVKVQPWNYFNIFSRILGGSQVEKGSYPWQVSLKQRQKHICGGSIVSPQWVITAAHCIANRNIVSTLNVTAGEYDLSQTDPGEQTLTIETVIIHPHFSTKKPMDYDIALLKMAGAFQFGHFVGPICLPELREQFEAGFICTTAGWGRLTEGGVLSQVLQEVNLPILTWEECVAALLTLKRPISGKTFLCTGFPDGGRDACQGDSGGSLMCRNKKGAWTLAGVTSWGLGCGRGWRNNVRKSDQGSPGIFTDISKVLPWIHEHIQTGNRRKSSRAWCSEQDVIVSGAEGKLHFPESLHLYYESKQRCVWTLLVPEEMHVLLSFSHLDVESCHHSYLSMYSLEDRPIGKFCGESLPSSILIGSNSLRLKFVSDATDNAARFNLTYKALKPNYIPDSGCSYLTVLFEEGLIQSLNYPENYSDKANCDWIFQASKHHLIKLSFQSLEIEESGDCTSDYVTVHSDVERKKEIARLCGYDVPTPVLSPSSIMLISFHSDENGTCRGFQATVSFIPKAGKKIELPTLWFPVLILVM.

Positions 1 to 22 are cleaved as a signal peptide; that stretch reads MLISRNKLILLLGIVFFERGKS. Positions 23–51 are cleaved as a propeptide — activation peptide; sequence ATLSLPKAPSCGQSLVKVQPWNYFNIFSR. The 248-residue stretch at 52–299 folds into the Peptidase S1 domain; it reads ILGGSQVEKG…VLPWIHEHIQ (248 aa). C77 and C93 form a disulfide bridge. H92 (charge relay system) is an active-site residue. A glycan (N-linked (GlcNAc...) asparagine) is linked at N104. E119 contacts Ca(2+). D142 functions as the Charge relay system in the catalytic mechanism. 5 disulfide bridges follow: C176–C246, C207–C225, C236–C265, C311–C341, and C365–C384. Residue S240 is the Charge relay system of the active site. CUB domains lie at 311–421 and 431–543; these read CSEQ…YKAL and CSYL…VSFI. N-linked (GlcNAc...) asparagine glycosylation is found at N415 and N451. 2 cysteine pairs are disulfide-bonded: C431/C458 and C485/C506. An N-linked (GlcNAc...) asparagine glycan is attached at N530.

It belongs to the peptidase S1 family.

It localises to the secreted. In terms of biological role, may be required for sperm ADAM3 processing and consequential sperm fertilizing ability. In vitro, has an endopeptidase activity. This Homo sapiens (Human) protein is Ovochymase-2.